Consider the following 127-residue polypeptide: Large ribosomal subunit protein bL20 (127 aa).

It belongs to the bacterial ribosomal protein bL20 family.

Functionally, binds directly to 23S ribosomal RNA and is necessary for the in vitro assembly process of the 50S ribosomal subunit. It is not involved in the protein synthesizing functions of that subunit. This is Large ribosomal subunit protein bL20 from Bifidobacterium adolescentis (strain ATCC 15703 / DSM 20083 / NCTC 11814 / E194a).